The primary structure comprises 73 residues: Frenatin 3.1 (73 aa).

A signal peptide spans Met-1–Cys-22. Residues Glu-23–Arg-46 constitute a propeptide that is removed on maturation. The disordered stretch occupies residues Glu-25–Lys-45. The span at Gln-30–Ser-42 shows a compositional bias: acidic residues.

Expressed by the skin glands.

The protein localises to the secreted. Antimicrobial peptide with activity against both Gram-positive and Gram-negative bacteria. The sequence is that of Frenatin 3.1 from Nyctimystes infrafrenatus (White-lipped tree frog).